The chain runs to 198 residues: Thymidine kinase (198 aa).

ATP is bound by residues 15 to 22 and 87 to 90; these read GCMFSGKT and DEAQ. The active-site Proton acceptor is the E88. Zn(2+) contacts are provided by C144, C147, C182, and H185.

It belongs to the thymidine kinase family. Homotetramer.

Its subcellular location is the cytoplasm. It carries out the reaction thymidine + ATP = dTMP + ADP + H(+). The chain is Thymidine kinase from Coprothermobacter proteolyticus (strain ATCC 35245 / DSM 5265 / OCM 4 / BT).